A 117-amino-acid chain; its full sequence is DNA-directed RNA polymerase II subunit RPB11 (117 aa).

The residue at position 1 (methionine 1) is an N-acetylmethionine.

The protein belongs to the archaeal Rpo11/eukaryotic RPB11/RPC19 RNA polymerase subunit family. Component of the RNA polymerase II (Pol II) core complex consisting of 12 subunits: a ten-subunit catalytic core composed of POLR2A/RPB1, POLR2B/RPB2, POLR2C/RPB3, POLR2I/RPB9, POLR2J/RPB11, POLR2E/RPABC1, POLR2F/RPABC2, POLR2H/RPABC3, POLR2K/RPABC4 and POLR2L/RPABC5 and a mobile stalk composed of two subunits POLR2D/RPB4 and POLR2G/RPB7, protruding from the core and functioning primarily in transcription initiation. Part of Pol II(G) complex, in which Pol II core associates with an additional subunit POLR2M; unlike conventional Pol II, Pol II(G) functions as a transcriptional repressor. Part of TBP-based Pol II pre-initiation complex (PIC), in which Pol II core assembles with general transcription factors and other specific initiation factors including GTF2E1, GTF2E2, GTF2F1, GTF2F2, TCEA1, ERCC2, ERCC3, GTF2H2, GTF2H3, GTF2H4, GTF2H5, GTF2A1, GTF2A2, GTF2B and TBP; this large multi-subunit PIC complex mediates DNA unwinding and targets Pol II core to the transcription start site where the first phosphodiester bond forms. Interacts with PTPN6; this interaction promotes the recruitment of RNA pol II to the PCK1 promoter.

It localises to the nucleus. In terms of biological role, DNA-dependent RNA polymerase catalyzes the transcription of DNA into RNA using the four ribonucleoside triphosphates as substrates. Component of RNA polymerase II which synthesizes mRNA precursors and many functional non-coding RNAs. Pol II is the central component of the basal RNA polymerase II transcription machinery. It is composed of mobile elements that move relative to each other. POLR2J/RPB11 is part of the core element with the central large cleft. This chain is DNA-directed RNA polymerase II subunit RPB11 (POLR2J), found in Bos taurus (Bovine).